Reading from the N-terminus, the 487-residue chain is N-succinylglutamate 5-semialdehyde dehydrogenase (487 aa).

221-226 (GSSDTG) is a binding site for NAD(+). Active-site residues include E244 and C278.

It belongs to the aldehyde dehydrogenase family. AstD subfamily.

It catalyses the reaction N-succinyl-L-glutamate 5-semialdehyde + NAD(+) + H2O = N-succinyl-L-glutamate + NADH + 2 H(+). It participates in amino-acid degradation; L-arginine degradation via AST pathway; L-glutamate and succinate from L-arginine: step 4/5. Functionally, catalyzes the NAD-dependent reduction of succinylglutamate semialdehyde into succinylglutamate. The sequence is that of N-succinylglutamate 5-semialdehyde dehydrogenase from Burkholderia vietnamiensis (strain G4 / LMG 22486) (Burkholderia cepacia (strain R1808)).